We begin with the raw amino-acid sequence, 273 residues long: MIKVMVTGALGRMGSSIIKTLCENKEDYKVVGAIDVPNHPKKGIDIGELIGIGNIGAPLETADNLEKVIKETRPDVLVDFTAPAPCVNTVKIASENNVNLVVGTTGFTNEQMEEMEEIINKNNIGAVISQNYAIGVNIFFKTLELLAQKIGDYDIEIVEMHHKFKKDAPSGTALRALEIIQNNLNRDSKAIYGREGLVGERTKEEICIHALRGGDVVGDHTVIFAGDGERLELTHKASSRQAFVSGVVLAVKYIADKKDGKIYNTFDVLNLNE.

Residues 8 to 13 (GALGRM), aspartate 35, 103 to 105 (GTT), and 129 to 132 (SQNY) contribute to the NAD(+) site. Histidine 161 (proton donor/acceptor) is an active-site residue. Histidine 162 serves as a coordination point for (S)-2,3,4,5-tetrahydrodipicolinate. Lysine 165 (proton donor) is an active-site residue. 171-172 (GT) contacts (S)-2,3,4,5-tetrahydrodipicolinate.

It belongs to the DapB family.

It is found in the cytoplasm. The enzyme catalyses (S)-2,3,4,5-tetrahydrodipicolinate + NAD(+) + H2O = (2S,4S)-4-hydroxy-2,3,4,5-tetrahydrodipicolinate + NADH + H(+). It carries out the reaction (S)-2,3,4,5-tetrahydrodipicolinate + NADP(+) + H2O = (2S,4S)-4-hydroxy-2,3,4,5-tetrahydrodipicolinate + NADPH + H(+). Its pathway is amino-acid biosynthesis; L-lysine biosynthesis via DAP pathway; (S)-tetrahydrodipicolinate from L-aspartate: step 4/4. Catalyzes the conversion of 4-hydroxy-tetrahydrodipicolinate (HTPA) to tetrahydrodipicolinate. The protein is 4-hydroxy-tetrahydrodipicolinate reductase of Methanococcus aeolicus (strain ATCC BAA-1280 / DSM 17508 / OCM 812 / Nankai-3).